A 144-amino-acid polypeptide reads, in one-letter code: Maximins 10/H15 (144 aa).

The N-terminal stretch at 1 to 18 is a signal peptide; it reads MNFKYIVAVSFLIASAYA. Residues 19-43 constitute a propeptide that is removed on maturation; sequence RSVQNDEQSLSQRDVLEEESLREIR. Ser-70 carries the post-translational modification Serine amide. A propeptide spanning residues 74-123 is cleaved from the precursor; the sequence is TAEDHEVMKRLEAVMRDLDSLDYPEEATERETRGFNQEEIANLFTKKEKR. Residue Leu-143 is modified to Leucine amide.

Belongs to the bombinin family. Expressed by the skin glands.

It localises to the secreted. Functionally, maximin-10 shows antimicrobial activity against bacteria and against the fungus C.albicans. It has little hemolytic activity. Maximin-H15 shows antimicrobial activity against bacteria and against the fungus C.albicans. Shows strong hemolytic activity. The protein is Maximins 10/H15 of Bombina maxima (Giant fire-bellied toad).